The following is a 350-amino-acid chain: Biotin synthase (350 aa).

The 219-residue stretch at 63-281 folds into the Radical SAM core domain; that stretch reads GDIELATLLS…IAVARITMPK (219 aa). Cysteine 78, cysteine 82, and cysteine 85 together coordinate [4Fe-4S] cluster. [2Fe-2S] cluster contacts are provided by cysteine 122, cysteine 153, cysteine 213, and arginine 285.

The protein belongs to the radical SAM superfamily. Biotin synthase family. In terms of assembly, homodimer. It depends on [4Fe-4S] cluster as a cofactor. The cofactor is [2Fe-2S] cluster.

The catalysed reaction is (4R,5S)-dethiobiotin + (sulfur carrier)-SH + 2 reduced [2Fe-2S]-[ferredoxin] + 2 S-adenosyl-L-methionine = (sulfur carrier)-H + biotin + 2 5'-deoxyadenosine + 2 L-methionine + 2 oxidized [2Fe-2S]-[ferredoxin]. It participates in cofactor biosynthesis; biotin biosynthesis; biotin from 7,8-diaminononanoate: step 2/2. Catalyzes the conversion of dethiobiotin (DTB) to biotin by the insertion of a sulfur atom into dethiobiotin via a radical-based mechanism. The polypeptide is Biotin synthase (Acidovorax ebreus (strain TPSY) (Diaphorobacter sp. (strain TPSY))).